The primary structure comprises 359 residues: Phosphate acyltransferase (359 aa).

It belongs to the PlsX family. Homodimer. Probably interacts with PlsY.

The protein resides in the cytoplasm. It carries out the reaction a fatty acyl-[ACP] + phosphate = an acyl phosphate + holo-[ACP]. Its pathway is lipid metabolism; phospholipid metabolism. In terms of biological role, catalyzes the reversible formation of acyl-phosphate (acyl-PO(4)) from acyl-[acyl-carrier-protein] (acyl-ACP). This enzyme utilizes acyl-ACP as fatty acyl donor, but not acyl-CoA. The sequence is that of Phosphate acyltransferase from Citrobacter koseri (strain ATCC BAA-895 / CDC 4225-83 / SGSC4696).